We begin with the raw amino-acid sequence, 412 residues long: Multifunctional CCA protein (412 aa).

Positions 8 and 11 each coordinate ATP. The CTP site is built by G8 and R11. Residues D21 and D23 each coordinate Mg(2+). Positions 91, 137, and 140 each coordinate ATP. The CTP site is built by R91, R137, and R140. In terms of domain architecture, HD spans 226–327 (TGEHVLMVVE…VKVLERCDAL (102 aa)).

Belongs to the tRNA nucleotidyltransferase/poly(A) polymerase family. Bacterial CCA-adding enzyme type 1 subfamily. As to quaternary structure, monomer. Can also form homodimers and oligomers. Mg(2+) is required as a cofactor. It depends on Ni(2+) as a cofactor.

The enzyme catalyses a tRNA precursor + 2 CTP + ATP = a tRNA with a 3' CCA end + 3 diphosphate. The catalysed reaction is a tRNA with a 3' CCA end + 2 CTP + ATP = a tRNA with a 3' CCACCA end + 3 diphosphate. In terms of biological role, catalyzes the addition and repair of the essential 3'-terminal CCA sequence in tRNAs without using a nucleic acid template. Adds these three nucleotides in the order of C, C, and A to the tRNA nucleotide-73, using CTP and ATP as substrates and producing inorganic pyrophosphate. tRNA 3'-terminal CCA addition is required both for tRNA processing and repair. Also involved in tRNA surveillance by mediating tandem CCA addition to generate a CCACCA at the 3' terminus of unstable tRNAs. While stable tRNAs receive only 3'-terminal CCA, unstable tRNAs are marked with CCACCA and rapidly degraded. In Azoarcus sp. (strain BH72), this protein is Multifunctional CCA protein.